Reading from the N-terminus, the 717-residue chain is Fatty acid oxidation complex subunit alpha (717 aa).

An enoyl-CoA hydratase/isomerase region spans residues 1-189 (MIYQSPTIEV…NVGAIDALVA (189 aa)). Residue Asp296 coordinates substrate. Residues 311–717 (KKVNSAAVLG…ANNGSYYQQA (407 aa)) form a 3-hydroxyacyl-CoA dehydrogenase region. NAD(+)-binding positions include Met324, Asp343, 400-402 (VVE), Lys407, and Ser429. The active-site For 3-hydroxyacyl-CoA dehydrogenase activity is His450. Position 453 (Asn453) interacts with NAD(+). Residues Asn500 and Tyr660 each contribute to the substrate site.

This sequence in the N-terminal section; belongs to the enoyl-CoA hydratase/isomerase family. The protein in the C-terminal section; belongs to the 3-hydroxyacyl-CoA dehydrogenase family. Heterotetramer of two alpha chains (FadB) and two beta chains (FadA).

It catalyses the reaction a (3S)-3-hydroxyacyl-CoA + NAD(+) = a 3-oxoacyl-CoA + NADH + H(+). It carries out the reaction a (3S)-3-hydroxyacyl-CoA = a (2E)-enoyl-CoA + H2O. The catalysed reaction is a 4-saturated-(3S)-3-hydroxyacyl-CoA = a (3E)-enoyl-CoA + H2O. The enzyme catalyses (3S)-3-hydroxybutanoyl-CoA = (3R)-3-hydroxybutanoyl-CoA. It catalyses the reaction a (3Z)-enoyl-CoA = a 4-saturated (2E)-enoyl-CoA. It carries out the reaction a (3E)-enoyl-CoA = a 4-saturated (2E)-enoyl-CoA. It functions in the pathway lipid metabolism; fatty acid beta-oxidation. In terms of biological role, involved in the aerobic and anaerobic degradation of long-chain fatty acids via beta-oxidation cycle. Catalyzes the formation of 3-oxoacyl-CoA from enoyl-CoA via L-3-hydroxyacyl-CoA. It can also use D-3-hydroxyacyl-CoA and cis-3-enoyl-CoA as substrate. The polypeptide is Fatty acid oxidation complex subunit alpha (Shewanella piezotolerans (strain WP3 / JCM 13877)).